Reading from the N-terminus, the 516-residue chain is Bifunctional pantoate ligase/cytidylate kinase (516 aa).

A pantoate--beta-alanine ligase region spans residues methionine 1 to threonine 279. Methionine 29–histidine 36 serves as a coordination point for ATP. The active-site Proton donor is the histidine 36. Glutamine 64 is a binding site for (R)-pantoate. Position 64 (glutamine 64) interacts with beta-alanine. Glycine 153–aspartate 156 contributes to the ATP binding site. Glutamine 159 serves as a coordination point for (R)-pantoate. Tyrosine 190–arginine 193 contacts ATP. The tract at residues phenylalanine 280–serine 516 is cytidylate kinase.

This sequence in the N-terminal section; belongs to the pantothenate synthetase family. It in the C-terminal section; belongs to the cytidylate kinase family. Type 1 subfamily.

The protein resides in the cytoplasm. It catalyses the reaction (R)-pantoate + beta-alanine + ATP = (R)-pantothenate + AMP + diphosphate + H(+). The catalysed reaction is CMP + ATP = CDP + ADP. The enzyme catalyses dCMP + ATP = dCDP + ADP. It functions in the pathway cofactor biosynthesis; (R)-pantothenate biosynthesis; (R)-pantothenate from (R)-pantoate and beta-alanine: step 1/1. Its function is as follows. Catalyzes the condensation of pantoate with beta-alanine in an ATP-dependent reaction via a pantoyl-adenylate intermediate. In terms of biological role, catalyzes the transfer of a phosphate group from ATP to either CMP or dCMP to form CDP or dCDP and ADP, respectively. This chain is Bifunctional pantoate ligase/cytidylate kinase, found in Prochlorococcus marinus (strain NATL2A).